The chain runs to 198 residues: ATP-dependent Clp protease proteolytic subunit (198 aa).

Ser103 (nucleophile) is an active-site residue. His128 is an active-site residue.

It belongs to the peptidase S14 family. Fourteen ClpP subunits assemble into 2 heptameric rings which stack back to back to give a disk-like structure with a central cavity, resembling the structure of eukaryotic proteasomes.

The protein localises to the cytoplasm. The enzyme catalyses Hydrolysis of proteins to small peptides in the presence of ATP and magnesium. alpha-casein is the usual test substrate. In the absence of ATP, only oligopeptides shorter than five residues are hydrolyzed (such as succinyl-Leu-Tyr-|-NHMec, and Leu-Tyr-Leu-|-Tyr-Trp, in which cleavage of the -Tyr-|-Leu- and -Tyr-|-Trp bonds also occurs).. Cleaves peptides in various proteins in a process that requires ATP hydrolysis. Has a chymotrypsin-like activity. Plays a major role in the degradation of misfolded proteins. This is ATP-dependent Clp protease proteolytic subunit from Ruthia magnifica subsp. Calyptogena magnifica.